The chain runs to 108 residues: PTS system galactose-specific EIIB component (108 aa).

The PTS EIIB type-3 domain occupies 3–108 (DKVIALACAA…VLAAAENLMN (106 aa)). The active-site Phosphocysteine intermediate is the C10. A Phosphocysteine; by EIIA modification is found at C10.

It carries out the reaction N(pros)-phospho-L-histidyl-[protein] + D-galactose(out) = D-galactose 6-phosphate(in) + L-histidyl-[protein]. Its function is as follows. The phosphoenolpyruvate-dependent sugar phosphotransferase system (sugar PTS), a major carbohydrate active transport system, catalyzes the phosphorylation of incoming sugar substrates concomitantly with their translocation across the cell membrane. Involved in galactose transport with PtcA and Lmg_0963. The sequence is that of PTS system galactose-specific EIIB component from Lactococcus lactis subsp. cremoris (strain MG1363).